The chain runs to 143 residues: P840 reaction center 17 kDa protein (143 aa).

Residues Met-1–Trp-23 show a composition bias toward polar residues. The interval Met-1 to Gly-25 is disordered.

In terms of assembly, component of the P840 reaction center.

This Chlorobaculum thiosulfatiphilum (Chlorobium limicola f.sp. thiosulfatophilum) protein is P840 reaction center 17 kDa protein (pscD).